The chain runs to 461 residues: Spermidine coumaroyl-CoA acyltransferase (461 aa).

Residues His-168 and Asp-393 each act as proton acceptor in the active site.

Belongs to the plant acyltransferase family. In terms of assembly, monomer. Mainly expressed in roots at low levels, specifically, in the root tip.

It carries out the reaction 2 (E)-4-coumaroyl-CoA + spermidine = N(1),N(8)-bis(coumaroyl)-spermidine + 2 CoA + 2 H(+). The protein operates within amine and polyamine metabolism; spermidine metabolism. Its function is as follows. Spermidine coumaroyl-CoA acyltransferase that mediates the conversion of spermidine into dicoumaroyl-spermidine. In Arabidopsis thaliana (Mouse-ear cress), this protein is Spermidine coumaroyl-CoA acyltransferase.